The primary structure comprises 227 residues: MNLSFFDQFSSPCLLGIPLILPSLLLPALLLPSPGNRWINNRLSTIQLWFTHLITKQLMTPLNKAGHKWALLLTSLILMLLSINLLGLLPYTFTPTTQLSMNMALALPLWLATLLTGLRNQPSASLGHLLPEGTPTPLIPALIMIETTSLLIRPLALGVRLTANLTAGHLLIQLISTATIALLPMMPSISALTALILFLLTILEVAVAMIQAYVFVLLLSLYLQENI.

6 consecutive transmembrane segments (helical) span residues 12–32 (PCLL…LLLP), 69–89 (WALL…LGLL), 98–118 (QLSM…LTGL), 139–159 (IPAL…ALGV), 170–190 (LLIQ…PSIS), and 196–216 (ILFL…YVFV).

It belongs to the ATPase A chain family. As to quaternary structure, component of the ATP synthase complex composed at least of ATP5F1A/subunit alpha, ATP5F1B/subunit beta, ATP5MC1/subunit c (homooctomer), MT-ATP6/subunit a, MT-ATP8/subunit 8, ATP5ME/subunit e, ATP5MF/subunit f, ATP5MG/subunit g, ATP5MK/subunit k, ATP5MJ/subunit j, ATP5F1C/subunit gamma, ATP5F1D/subunit delta, ATP5F1E/subunit epsilon, ATP5PF/subunit F6, ATP5PB/subunit b, ATP5PD/subunit d, ATP5PO/subunit OSCP. ATP synthase complex consists of a soluble F(1) head domain (subunits alpha(3) and beta(3)) - the catalytic core - and a membrane F(0) domain - the membrane proton channel (subunits c, a, 8, e, f, g, k and j). These two domains are linked by a central stalk (subunits gamma, delta, and epsilon) rotating inside the F1 region and a stationary peripheral stalk (subunits F6, b, d, and OSCP). Interacts with DNAJC30; interaction is direct.

The protein resides in the mitochondrion inner membrane. The enzyme catalyses H(+)(in) = H(+)(out). Subunit a, of the mitochondrial membrane ATP synthase complex (F(1)F(0) ATP synthase or Complex V) that produces ATP from ADP in the presence of a proton gradient across the membrane which is generated by electron transport complexes of the respiratory chain. ATP synthase complex consist of a soluble F(1) head domain - the catalytic core - and a membrane F(1) domain - the membrane proton channel. These two domains are linked by a central stalk rotating inside the F(1) region and a stationary peripheral stalk. During catalysis, ATP synthesis in the catalytic domain of F(1) is coupled via a rotary mechanism of the central stalk subunits to proton translocation. With the subunit c (ATP5MC1), forms the proton-conducting channel in the F(0) domain, that contains two crucial half-channels (inlet and outlet) that facilitate proton movement from the mitochondrial intermembrane space (IMS) into the matrix. Protons are taken up via the inlet half-channel and released through the outlet half-channel, following a Grotthuss mechanism. This is ATP synthase F(0) complex subunit a from Gallus gallus (Chicken).